The primary structure comprises 324 residues: MKVTVLGAAGGIGQTLSLLLKLRLPAGADLALYDISPVTPGIAVDISHIPTSVNAIGYAGEDPSVALKDPSVALKDTNLVIITAGIARKPGMTRADLFNINAGIVKDLVEKVAEVCPMACIGIVTNPVNTLVPIAAEVLRKAGVYDKSKLFGVTTLDVVRAKTFVSELKHKNVETVTVPVVGGHSGTTILPLLSQALAEGRLLDFSQTEIESLTQRIKNAGTEVVEAKAGGGSATLSMAESGARFALAVFKALLGEDCVRYAYVQSKEGSGYPEFFAHPVRFGLKGIEEILPIAPLNEYEQTQFEELKPILEADIELGKKFVNP.

Residues Gly7 to Gly13 and Asp34 contribute to the NAD(+) site. 2 residues coordinate substrate: Arg88 and Arg94. Residues Asn101 and Val124 to Asn126 each bind NAD(+). Substrate contacts are provided by Asn126 and Arg160. His184 acts as the Proton acceptor in catalysis. Met238 contributes to the NAD(+) binding site.

This sequence belongs to the LDH/MDH superfamily. MDH type 1 family. As to quaternary structure, homodimer.

The catalysed reaction is (S)-malate + NAD(+) = oxaloacetate + NADH + H(+). Catalyzes the reversible oxidation of malate to oxaloacetate. This is Malate dehydrogenase from Haemophilus ducreyi (strain 35000HP / ATCC 700724).